The sequence spans 2801 residues: MASKERLYELWMLYYTKKDVVYLQQWLEAFVASFEKVIDVHSIEPRRLEEWSADVPLLPKEVLVFLSTQLWHSALHMSGQDQSITAPHPLLLIKFFIIICRNMENIDSEKTPGFVFETIKLLNFCLAQLKKQPDDQSTLQAVVQHGLLLCENLFDPYQTWRRRQAGEEVSMLERSKYKFSPLVLPEELPMLFHEYLQDSELIPEPLVVRLVHLQGAVISGCKRNGLLSITPQAVKDLMSVLRSWCLCPASSPQQPRDPQLLRMALRCLTVMIHLLHSSSVNERQVEIRSALDDYFQLLNWNRPPDSQQGDMHAWEDNLITLLEHMLNAIPEILQCSDRPVLQAIFLNNNCFEHILRLIQNSKLYQSNRFKLECEGQCDLTTRLLTESEVEQVWEKGSDCITVHAIRVLTAIMSNSPSAKEVFKERIGYSQLFDVLKSQGQPTKRLLQELMNMAVEGEHSQAMQLGISNEQPLLLLLQWLPDLGSRSLQLLVSQWLAAVCRGTLSCRTVSVEAGLVGSLLEVLSEPPERLDRQCADSLLGLLQDLGSLSLRPCELKSLLKLLRTEPGAPPHPYCGRVVRVLSAMAARGEGGCSALQYFDLTPPMAGIMVPAIQRWPGSAFAFHAWLCLNTDFPPPQHHYSESHLTNMDNTVRMAKGPRRKQLYSFFTASGTGFEAFFTTEEVLVVAVCTKKEYMAVSLPEHPFNDCAWHSVAIVHVPGRRPFGQNVVTVYVDGVQCKTAPLRFPSLNEPFTSCCIGSAGHRTTTTTMTTSPTLPNPPHSPSEMAFAAHTGPPTLLRSQSFPASFAAAAGGRPGGNRESPVHTIQAGLQDTAWGSPSSLGGLLATAFICHEALQPAQARALFTAGPNNVSLFKADGEPSEVNSKLVLYYTPKAFKSQICLDLSPNHLYDGRLTGHRVVNWDVKDVLSSVGGMGALLPLLEQVCLLDQRETVGQETSDLLGPELTSSRGPAGMLLPLGKSSEGRLEKNSVAAFLLMIKNMLRNHPANQESLLQCHGPAIIGAMLGKVPSSMMDMSVLMACQFLLKQVSNEGNNALLSQLYQYLLFDFRIWSRSHFAVCLGHVQYLTTVINEGKLKTRRKYGVQYILDSIRTHYSVEKDGSPLSDERQTVQISLFSLLKDLLKSPTAEELHSVLAYAAIVQDEQQVISVLDVLHTVLKSSPPPREQVVTVLLDRRVEQLYYLLLKTNYGDEARERLFRVMYKVLKSERVHDRNKQLIKLKDSGYLGLVCSFGDVPITMTTVRCLYEQVLATDPTPSFKDLLAVVYLSHRADLSARLEIVRKLFCLIHSNEEYVKQLAHQSGWQDVLTKLYVKESYESRVRSQSNSLSSPTSSLDPVLSRPVFRRDDSVTEDVRQNVYITLAARHEEEYEEEEGETQDASEGFSDLSQSPPSTGQLKNDSLHFKPFDSGDQSSHSSTLSNTVDFPPSRLQEEDEAVYQPLSPFGSPFELELNHQKGPQTPVGSQPETPSPLEHNKTFLGMRPRKSSSLSNVLDDTSYSTEPPTDTISNTSNPQAPEEELCNLLTNIVFSVLWIGTEGSEDVIWRERGQVFSVLTKLGSSCQLVRPPDDIKRSLLEMMLESSLSDLRDSQGVSLPHVPSLLRLLRLLQDFLFAEGTCNHTLWSEKIFEGVVNLLDRLKAWHTTPGSAGSAELKEMSLIGLRIITGYIQQQQNPQVCEMACLKLHSLLQTVLCLSWEEVCFLLGRLGAPLCPANSASDTSAEGLPSPLVPIVRALLDQHADHTTLQEKLPNLPATNGSPSFAQDLQIYCSTAEWQQFYQNHVEPTMQQYELDTFGKSHDLMSNFWNSCFDDLMSTGQRRDKERSDSKAKFQEVIVDPYLKRVRTENSRYHSVQKMINGQQTVVWRHWRSLRRLLSSDRGAWPLRVQPEVKWKLSSAETYSKMRLKLVPNYSFDSHSDASALRDNMGADSPRSSTEPLPLAVAREAKVSDMDDDKLEDEDIVFLEEAEEAEEESQKEKLVLSEDCELITIVAVVPGRLEVTTHHLYFYDGSSEKEETEEGIGFDFKRPLSQLREVHLRRYNLRRSALELFFIDQSHYFINFRKGVRNKVYSRILGLRPPNLFYFGSRSPQELLKASNLTHRWVCREISNFEYLMQLNTIAGRTYNDLSQYPVFPWVLCDYTSAELDLDDPAVFRDLSKPIGVVNPRHAQNVREKYESFEDPTGTIDKFHYGTHYSNAAGVMHYMIRTEPFTSLHIQLQSGKFDCADRQFHSIAAAWQARMESPADVKELIPEFFYFPEFLENMNGFDLGCLQISQEKVNNVLLPPWASSREDFIRKHRKALESEHVSAHLHEWIDLIFGYKQRGPEAVEALNVFYYCTYEGAVDLDAIANETERKALEGIISNFGQTPCQLLKEPHPPRMSAENAFRRAARLDILPPNLFDQLSKLRSFKEVVSDGLALVQAVVPRNQTRSFIIPGSDILVTVSANGMIGTHSWLPYDKNIANYFTFTRDPSVSNPKTQRFLSGPFSPGVEMGSQVLVVSSDGRLLFSGGHWDCSLRVTMLGKAKLVGRICRHIDVVTCLALDLCGIYLISGSRDTTCMVWQVLQQGGFSSGLSPRPIQVLCGHDQEVTCVAISTELDMAISGSKDGTVIVHSVRRGQYLWTLRPPCENCVSAPVAQLEVGMEGHIVMQTVLEGRSAGKERYALHVYSVNGTLLASETLDEKISALYLVPDYLIVGTQQGNLHIRDLYSLNLAVAPLALKVPVRCVSVTKESSHILVGLEDGKLIVVGAGKPEEVRSGQFSRRLWGSTRRISQVSSGETEYNPVEAPAK.

The disordered stretch occupies residues 1379–1529 (RHEEEYEEEE…TISNTSNPQA (151 aa)). A compositionally biased stretch (acidic residues) spans 1383-1393 (EYEEEEGETQD). Polar residues-rich tracts occupy residues 1400–1413 (DLSQ…QLKN), 1424–1437 (GDQS…SNTV), 1470–1481 (KGPQTPVGSQPE), and 1500–1528 (SSSL…SNPQ). Residues 1986-2086 (SQKEKLVLSE…VRNKVYSRIL (101 aa)) enclose the BEACH-type PH domain. In terms of domain architecture, BEACH spans 2099 to 2391 (RSPQELLKAS…QLLKEPHPPR (293 aa)). WD repeat units lie at residues 2431–2468 (LVQA…SWLP), 2492–2535 (RFLS…MLGK), 2538–2575 (LVGR…VWQV), 2588–2626 (RPIQ…VHSV), 2633–2676 (WTLR…RYAL), 2684–2719 (TLLA…IRDL), and 2727–2762 (APLA…VGAG).

This sequence belongs to the WD repeat neurobeachin family.

The protein localises to the endoplasmic reticulum. In terms of biological role, involved in thrombopoiesis. Plays a role in the development or secretion of alpha-granules, that contain several growth factors important for platelet biogenesis. This chain is Neurobeachin-like protein 2 (nbeal2), found in Danio rerio (Zebrafish).